The sequence spans 252 residues: 3-dehydroquinate dehydratase (252 aa).

3-dehydroquinate contacts are provided by residues 46–48 (EWR) and Arg-82. The active-site Proton donor/acceptor is the His-143. Lys-170 functions as the Schiff-base intermediate with substrate in the catalytic mechanism. Residues Arg-212, Ser-231, and Gln-235 each contribute to the 3-dehydroquinate site.

Belongs to the type-I 3-dehydroquinase family. Homodimer.

The catalysed reaction is 3-dehydroquinate = 3-dehydroshikimate + H2O. Its pathway is metabolic intermediate biosynthesis; chorismate biosynthesis; chorismate from D-erythrose 4-phosphate and phosphoenolpyruvate: step 3/7. Involved in the third step of the chorismate pathway, which leads to the biosynthesis of aromatic amino acids. Catalyzes the cis-dehydration of 3-dehydroquinate (DHQ) and introduces the first double bond of the aromatic ring to yield 3-dehydroshikimate. The sequence is that of 3-dehydroquinate dehydratase from Listeria monocytogenes serotype 4b (strain CLIP80459).